Consider the following 246-residue polypeptide: MMMENSREQQPESSPANNNSKKKKKKKTASRFRRVCVFCGSSPGKKASYQVAAVQLGQQLVERGIDLVYGGGSVGLMGLVSRAVHGGGGHVVGVVPNGVLPRELIGETLGEVRAVGSMHQRKAEMARESDAFIALPGGYGTLEELLEVITWAQLRIHHKPVGLLNVDGYYDSLLAFIDKAVHEGFVSPPARRIIVAAPTASDLLCKLEEYVPPPHDATALKLTWEMSTVSEQHAGSIYSPKPDMAR.

The segment covering 1–10 (MMMENSREQQ) has biased composition (basic and acidic residues). Residues 1–28 (MMMENSREQQPESSPANNNSKKKKKKKT) form a disordered region. Substrate-binding positions include Glu103, 121 to 122 (RK), 138 to 144 (GYGTLEE), and Thr150.

Belongs to the LOG family. In terms of tissue distribution, expressed in roots and leaves.

The enzyme catalyses N(6)-(dimethylallyl)adenosine 5'-phosphate + H2O = N(6)-dimethylallyladenine + D-ribose 5-phosphate. It catalyses the reaction 9-ribosyl-trans-zeatin 5'-phosphate + H2O = trans-zeatin + D-ribose 5-phosphate. Functionally, cytokinin-activating enzyme working in the direct activation pathway. Phosphoribohydrolase that converts inactive cytokinin nucleotides to the biologically active free-base forms. In Oryza sativa subsp. japonica (Rice), this protein is Probable cytokinin riboside 5'-monophosphate phosphoribohydrolase LOGL5 (LOGL5).